Here is a 66-residue protein sequence, read N- to C-terminus: Small ribosomal subunit protein bS21 (66 aa).

This sequence belongs to the bacterial ribosomal protein bS21 family.

This Rickettsia africae (strain ESF-5) protein is Small ribosomal subunit protein bS21.